The following is a 286-amino-acid chain: Replication protein RepA (286 aa).

This sequence belongs to the initiator RepB protein family.

Functionally, repA is essential for origin function, autoregulates its own synthesis from the promoter, and, when overproduced, blocks origin function. The chain is Replication protein RepA (repA) from Escherichia coli.